The sequence spans 738 residues: Conserved oligomeric Golgi complex subunit 4 (738 aa).

Belongs to the COG4 family. As to quaternary structure, component of the conserved oligomeric Golgi complex which is composed of eight different subunits and is required for normal Golgi morphology and localization. Interacts with COG2 and COG3.

The protein resides in the golgi apparatus membrane. Functionally, required for normal Golgi function. This chain is Conserved oligomeric Golgi complex subunit 4, found in Arabidopsis thaliana (Mouse-ear cress).